A 209-amino-acid polypeptide reads, in one-letter code: CAAX box protein 1 (209 aa).

The segment at 182–209 (TAGRPPRDLSPSARPISSPPPETSCVLA) is disordered. Residue C206 is modified to Cysteine methyl ester. C206 carries S-farnesyl cysteine lipidation. A propeptide spans 207–209 (VLA) (removed in mature form).

In terms of tissue distribution, ubiquitous.

The protein resides in the cell membrane. This Homo sapiens (Human) protein is CAAX box protein 1.